We begin with the raw amino-acid sequence, 122 residues long: Large ribosomal subunit protein bL12 (122 aa).

The protein belongs to the bacterial ribosomal protein bL12 family. In terms of assembly, homodimer. Part of the ribosomal stalk of the 50S ribosomal subunit. Forms a multimeric L10(L12)X complex, where L10 forms an elongated spine to which 2 to 4 L12 dimers bind in a sequential fashion. Binds GTP-bound translation factors.

Its function is as follows. Forms part of the ribosomal stalk which helps the ribosome interact with GTP-bound translation factors. Is thus essential for accurate translation. This chain is Large ribosomal subunit protein bL12, found in Staphylococcus epidermidis (strain ATCC 35984 / DSM 28319 / BCRC 17069 / CCUG 31568 / BM 3577 / RP62A).